A 290-amino-acid chain; its full sequence is 4-hydroxybenzoate octaprenyltransferase (290 aa).

8 consecutive transmembrane segments (helical) span residues 23–43 (IGAL…TPGV), 46–66 (LWIM…GCVV), 99–119 (LFVV…TMTI), 141–161 (LPQV…FAAV), 163–183 (ESVP…AVAY), 213–233 (LIIG…GELN), 234–254 (GLGW…VYQQ), and 268–288 (AFMN…MSYW).

It belongs to the UbiA prenyltransferase family. The cofactor is Mg(2+).

It is found in the cell inner membrane. It catalyses the reaction all-trans-octaprenyl diphosphate + 4-hydroxybenzoate = 4-hydroxy-3-(all-trans-octaprenyl)benzoate + diphosphate. The protein operates within cofactor biosynthesis; ubiquinone biosynthesis. Its function is as follows. Catalyzes the prenylation of para-hydroxybenzoate (PHB) with an all-trans polyprenyl group. Mediates the second step in the final reaction sequence of ubiquinone-8 (UQ-8) biosynthesis, which is the condensation of the polyisoprenoid side chain with PHB, generating the first membrane-bound Q intermediate 3-octaprenyl-4-hydroxybenzoate. The sequence is that of 4-hydroxybenzoate octaprenyltransferase from Shigella flexneri.